Reading from the N-terminus, the 116-residue chain is Non-specific lipid-transfer protein (116 aa).

The signal sequence occupies residues 1–25; the sequence is MAKMAMMVLCAGVTCMVVGAPYTEA. 4 disulfide bridges follow: C28-C75, C38-C52, C53-C98, and C73-C112.

It belongs to the plant LTP family.

Functionally, plant non-specific lipid-transfer proteins transfer phospholipids as well as galactolipids across membranes. May play a role in wax or cutin deposition in the cell walls of expanding epidermal cells and certain secretory tissues. This is Non-specific lipid-transfer protein from Helianthus annuus (Common sunflower).